We begin with the raw amino-acid sequence, 153 residues long: 6,7-dimethyl-8-ribityllumazine synthase (153 aa).

5-amino-6-(D-ribitylamino)uracil-binding positions include Phe22, 56–58 (AFE), and 80–82 (TVI). Residue 85 to 86 (ST) participates in (2S)-2-hydroxy-3-oxobutyl phosphate binding. His88 acts as the Proton donor in catalysis. Phe113 provides a ligand contact to 5-amino-6-(D-ribitylamino)uracil. Arg127 is a (2S)-2-hydroxy-3-oxobutyl phosphate binding site.

The protein belongs to the DMRL synthase family. In terms of assembly, forms an icosahedral capsid composed of 60 subunits, arranged as a dodecamer of pentamers.

The enzyme catalyses (2S)-2-hydroxy-3-oxobutyl phosphate + 5-amino-6-(D-ribitylamino)uracil = 6,7-dimethyl-8-(1-D-ribityl)lumazine + phosphate + 2 H2O + H(+). Its pathway is cofactor biosynthesis; riboflavin biosynthesis; riboflavin from 2-hydroxy-3-oxobutyl phosphate and 5-amino-6-(D-ribitylamino)uracil: step 1/2. Its function is as follows. Catalyzes the formation of 6,7-dimethyl-8-ribityllumazine by condensation of 5-amino-6-(D-ribitylamino)uracil with 3,4-dihydroxy-2-butanone 4-phosphate. This is the penultimate step in the biosynthesis of riboflavin. This Actinobacillus pleuropneumoniae serotype 3 (strain JL03) protein is 6,7-dimethyl-8-ribityllumazine synthase.